Reading from the N-terminus, the 140-residue chain is Putative nickel-responsive regulator 3 (140 aa).

4 residues coordinate Ni(2+): His-81, His-92, His-94, and Cys-100.

It belongs to the transcriptional regulatory CopG/NikR family. It depends on Ni(2+) as a cofactor.

Functionally, transcriptional regulator. In Methanosarcina mazei (strain ATCC BAA-159 / DSM 3647 / Goe1 / Go1 / JCM 11833 / OCM 88) (Methanosarcina frisia), this protein is Putative nickel-responsive regulator 3.